A 362-amino-acid chain; its full sequence is Notoamide biosynthesis cluster protein J' (362 aa).

An N-terminal signal peptide occupies residues 1-22 (MRNMATMLHLLTLILLTSPAST). N-linked (GlcNAc...) asparagine glycans are attached at residues Asn-157, Asn-190, Asn-280, and Asn-338.

Part of the gene cluster that mediates the biosynthesis of notoamide, a fungal indole alkaloid that belongs to a family of natural products containing a characteristic bicyclo[2.2.2]diazaoctane core. The first step of notoamide biosynthesis involves coupling of L-proline and L-tryptophan by the bimodular NRPS notE', to produce cyclo-L-tryptophan-L-proline called brevianamide F. The reverse prenyltransferase notF' then acts as a deoxybrevianamide E synthase and converts brevianamide F to deoxybrevianamide E via reverse prenylation at C-2 of the indole ring leading to the bicyclo[2.2.2]diazaoctane core. Deoxybrevianamide E is further hydroxylated at C-6 of the indole ring, likely catalyzed by the cytochrome P450 monooxygenase notG', to yield 6-hydroxy-deoxybrevianamide E. 6-hydroxy-deoxybrevianamide E is a specific substrate of the prenyltransferase notC' for normal prenylation at C-7 to produce 6-hydroxy-7-prenyl-deoxybrevianamide, also called notoamide S. As the proposed pivotal branching point in notoamide biosynthesis, notoamide S can be diverted to notoamide E through an oxidative pyran ring closure putatively catalyzed by either notH' cytochrome P450 monooxygenase or the notD' FAD-linked oxidoreductase. This step would be followed by an indole 2,3-epoxidation-initiated pinacol-like rearrangement catalyzed by the notB' FAD-dependent monooxygenase leading to the formation of notoamide C and notoamide D. On the other hand notoamide S is converted to notoamide T by notH' (or notD'), a bifunctional oxidase that also functions as the intramolecular Diels-Alderase responsible for generation of (-)-notoamide T. To generate antipodal (+)-notoaminide T, notH (or notD) in Aspergillus strain MF297-2 is expected to catalyze a Diels-Alder reaction leading to the opposite stereochemistry. The remaining oxidoreductase notD' (or notH') likely catalyzes the oxidative pyran ring formation to yield (-)-stephacidin A. The FAD-dependent monooxygenase notI' is highly similar to notB' and is predicted to catalyze a similar conversion from (-)-stephacidin A to (+)-notoamide B via the 2,3-epoxidation of (-)-stephacidin A followed by a pinacol-type rearrangement. Finally, it remains unclear which enzyme could be responsible for the final hydroxylation steps leading to notoamide A and sclerotiamide. The function of notJ' in the notoamide biosynthesis has not been determined yet. The sequence is that of Notoamide biosynthesis cluster protein J' from Aspergillus versicolor.